Consider the following 784-residue polypeptide: Endonuclease MutS2 (784 aa).

ATP is bound at residue 335–342 (GPNTGGKT). Positions 527–546 (ERSKKQAEEDEARAHSAREE) are disordered. A Smr domain is found at 709 to 784 (LDLRGERYED…GTGVTVVELK (76 aa)).

The protein belongs to the DNA mismatch repair MutS family. MutS2 subfamily. As to quaternary structure, homodimer. Binds to stalled ribosomes, contacting rRNA.

In terms of biological role, endonuclease that is involved in the suppression of homologous recombination and thus may have a key role in the control of bacterial genetic diversity. Functionally, acts as a ribosome collision sensor, splitting the ribosome into its 2 subunits. Detects stalled/collided 70S ribosomes which it binds and splits by an ATP-hydrolysis driven conformational change. Acts upstream of the ribosome quality control system (RQC), a ribosome-associated complex that mediates the extraction of incompletely synthesized nascent chains from stalled ribosomes and their subsequent degradation. Probably generates substrates for RQC. This Geobacillus thermodenitrificans (strain NG80-2) protein is Endonuclease MutS2.